Here is a 215-residue protein sequence, read N- to C-terminus: MIQTFFDFPVYFKFFIGLFALVNPVGIIPVFISMTSYQTAAARNKTNLTANLSVAIILWISLFLGDTILQLFGISIDSFRIAGGILVVTIAMSMISGKLGEDKQNKQEKSETAVRESIGVVPLALPLMAGPGAISSTIVWGTRYHSISYLFGFFVAIALFALCCWGLFRMAPWLVRVLRQTGINVITRIMGLLLMALGIEFIVTGIKGIFPGLLN.

6 helical membrane-spanning segments follow: residues 14–34 (FFIG…FISM), 54–74 (VAII…LFGI), 81–101 (IAGG…KLGE), 120–140 (VVPL…TIVW), 147–167 (ISYL…CWGL), and 189–209 (IMGL…IKGI).

It belongs to the UPF0056 (MarC) family.

Its subcellular location is the cell membrane. This chain is UPF0056 membrane protein YhcE (ychE), found in Escherichia coli (strain K12).